Here is a 206-residue protein sequence, read N- to C-terminus: Proteasome subunit beta 2 (206 aa).

A propeptide spans M1 to K7 (removed in mature form; by autocatalysis). The active-site Nucleophile is the T8.

Belongs to the peptidase T1B family. As to quaternary structure, the 20S proteasome core is composed of 14 alpha and 14 beta subunits that assemble into four stacked heptameric rings, resulting in a barrel-shaped structure. The two inner rings, each composed of seven catalytic beta subunits, are sandwiched by two outer rings, each composed of seven alpha subunits. The catalytic chamber with the active sites is on the inside of the barrel. Has a gated structure, the ends of the cylinder being occluded by the N-termini of the alpha-subunits. Is capped at one or both ends by the proteasome regulatory ATPase, PAN.

The protein localises to the cytoplasm. It catalyses the reaction Cleavage of peptide bonds with very broad specificity.. Its activity is regulated as follows. The formation of the proteasomal ATPase PAN-20S proteasome complex, via the docking of the C-termini of PAN into the intersubunit pockets in the alpha-rings, triggers opening of the gate for substrate entry. Interconversion between the open-gate and close-gate conformations leads to a dynamic regulation of the 20S proteasome proteolysis activity. Functionally, component of the proteasome core, a large protease complex with broad specificity involved in protein degradation. The protein is Proteasome subunit beta 2 of Desulfurococcus amylolyticus (strain DSM 18924 / JCM 16383 / VKM B-2413 / 1221n) (Desulfurococcus kamchatkensis).